A 259-amino-acid chain; its full sequence is NAP1-related protein 1 (259 aa).

The span at 1–15 (MAAAEQKGKKPRTDG) shows a compositional bias: basic and acidic residues. Positions 1–20 (MAAAEQKGKKPRTDGAEAEP) are disordered. Residues 21-62 (VDAALLQSIEKLQEIQDEIEKVNEEACDKVLELEQKYNEVRR) are a coiled coil. Positions 228 to 259 (ELLDDDDEVSDDDDEEEDDEDQGEGEEDGEEN) are disordered.

The protein belongs to the nucleosome assembly protein (NAP) family.

Its subcellular location is the nucleus. The protein localises to the cytoplasm. Acts as a histone H2A/H2B chaperone in nucleosome assembly. This is NAP1-related protein 1 from Oryza sativa subsp. indica (Rice).